The following is a 343-amino-acid chain: Sodium/bile acid cotransporter 7-B (343 aa).

Residues 1 to 9 are Cytoplasmic-facing; it reads MGLLERLRK. The chain crosses the membrane as a helical span at residues 10 to 30; that stretch reads EWFIIGIILVIVAAKLEPTIG. Residues 31 to 37 lie on the Extracellular side of the membrane; sequence EKGGPLK. Residues 38–58 form a helical membrane-spanning segment; the sequence is PEITITYIAVSAIFFNSGLSL. At 59–71 the chain is on the cytoplasmic side; that stretch reads KTEELTNALMHVK. The helical transmembrane segment at 72–92 threads the bilayer; that stretch reads LHLFVQLFTLVFFPTAIWIFL. The Extracellular portion of the chain corresponds to 93 to 116; sequence QVLSLTPINEWLLKGLQTVSCMPP. Residues 117–137 form a helical membrane-spanning segment; sequence PVSSAVILTKAVGGNEAAAIF. A topological domain (cytoplasmic) is located at residue asparagine 138. Residues 139–159 traverse the membrane as a helical segment; sequence SAFGSFLGIVVTPLLLLLFLG. Over 160–163 the chain is Extracellular; sequence SSSS. The helical transmembrane segment at 164–184 threads the bilayer; sequence VPFTSIFSQLFMTVVVPLIIG. The Cytoplasmic portion of the chain corresponds to 185 to 201; the sequence is QIVRRYIKDWLERKKPP. A helical transmembrane segment spans residues 202 to 222; sequence FGAISSCVLLMIIYTTFCDTF. At 223–234 the chain is on the extracellular side; that stretch reads SNPNIDLDTFSL. Residues 235–255 traverse the membrane as a helical segment; it reads VVIVFIIFFIQLAFMLLTFLF. At 256–270 the chain is on the cytoplasmic side; sequence STSKNSGFTPADTVA. The helical transmembrane segment at 271–291 threads the bilayer; the sequence is IVFCSTHKSLTLGIPMLKIVF. The Extracellular segment spans residues 292-298; that stretch reads AGYEHLS. The helical transmembrane segment at 299–319 threads the bilayer; sequence LISVPLLIYHPAQILLGSVLV. The Cytoplasmic portion of the chain corresponds to 320–343; sequence PTIKSWMLSRRKALKLTRQPKIPL.

This sequence belongs to the bile acid:sodium symporter (BASS) (TC 2.A.28) family.

Its subcellular location is the cell membrane. It is found in the endoplasmic reticulum membrane. It localises to the golgi apparatus membrane. Its function is as follows. Involved in teeth and skeletal development. Has an essential role in the biosynthesis and trafficking of glycosaminoglycans and glycoproteins to produce a proper functioning extracellular matrix. Required for extracellular matrix mineralization. Also involved in the regulation of cellular calcium homeostasis. Does not show transport activity towards bile acids or steroid sulfates. This chain is Sodium/bile acid cotransporter 7-B (slc10a7-b), found in Xenopus laevis (African clawed frog).